Here is a 551-residue protein sequence, read N- to C-terminus: DNA mismatch repair protein MutL (551 aa).

The protein belongs to the DNA mismatch repair MutL/HexB family.

This protein is involved in the repair of mismatches in DNA. It is required for dam-dependent methyl-directed DNA mismatch repair. May act as a 'molecular matchmaker', a protein that promotes the formation of a stable complex between two or more DNA-binding proteins in an ATP-dependent manner without itself being part of a final effector complex. This chain is DNA mismatch repair protein MutL, found in Thermosipho melanesiensis (strain DSM 12029 / CIP 104789 / BI429).